Reading from the N-terminus, the 271-residue chain is Beta-lactamase (271 aa).

Serine 46 functions as the Acyl-ester intermediate in the catalytic mechanism. A substrate-binding site is contributed by 210–212 (KTG).

Belongs to the class-A beta-lactamase family. In terms of assembly, monomer.

It carries out the reaction a beta-lactam + H2O = a substituted beta-amino acid. Functionally, hydrolyzes broad-spectrum beta-lactam antibiotics. Active against cephalosporins. This is Beta-lactamase from Proteus vulgaris.